Here is a 549-residue protein sequence, read N- to C-terminus: Glucose-6-phosphate isomerase (549 aa).

E355 (proton donor) is an active-site residue. Catalysis depends on residues H386 and K514.

Belongs to the GPI family.

It localises to the cytoplasm. The catalysed reaction is alpha-D-glucose 6-phosphate = beta-D-fructose 6-phosphate. It functions in the pathway carbohydrate biosynthesis; gluconeogenesis. The protein operates within carbohydrate degradation; glycolysis; D-glyceraldehyde 3-phosphate and glycerone phosphate from D-glucose: step 2/4. In terms of biological role, catalyzes the reversible isomerization of glucose-6-phosphate to fructose-6-phosphate. The chain is Glucose-6-phosphate isomerase from Desulfatibacillum aliphaticivorans.